The sequence spans 873 residues: MKSAEIREKFLKFFESKGHQIVASSSLVPHDDPTLLFTNAGMNQFKDVFLGFDKRPYSRATTSQKCVRAGGKHNDLENVGYTARHHTFFEMLGNFSFGDYFKHDAITYAWELLTEEFGLPKDKLWVTVYADDDEAYDIWTKEIGVPAERVIRIGDNKGARYASDNFWMMGDTGPCGPCTEIFYDHGPEIWGGPPGSPDEDGDRYIEIWNNVFMQFNRDEAGVMHPLPRPSVDTGMGLERVSAVLQHVHSNYEIDLFQTLIRAAARETGCADLDSPSLKVIADHIRACSFLIADGVIPGNEGRGYVLRRIIRRAIRHGYKLGSRAAFFHRLVPDLVTEMGPAYPELKAGQARVADVLKQEEERFFATIENGMAILETELAAMATAGSRTFNGETAFKLHDTYGFPLDLTADVCRERDVTVDAAAFDAAMARQKEQARAAGKFRMAMNLEYEGPETKFHGYERLEERGTVLALYKDGAPVVELQEGDIGVVVLDNTPFYAESGGQVGDRGELRGSAGIFEVEDTQKIQAAVYGHHGVVKTGRLAVGQELGARVDGEARASTQRNHSVTHLMHKALREVLGAHVQQKGSQVDPDKTRFDFAHTAPLSPEEIREVEDLVNAEILANVATEARVMSIDDAQKSGAMMLFGEKYGDEVRVLAIGSSKELCGGTHVARTGDIGLFKIVSEGGVAAGVRRIEAVTGANALRYAQEQERRVQGISALLKVQPDEVAERIAGILDNVRALEKELARMKSRLAASQGDELVAQAVEVRGAKVLAAMLEGADVATLRETLDKLKDKLKSAVIVLAAVADGRVSLIAGVTSDLTAKLKAGELVNMVAQQVGGKGGGRPDMAQAGGTDPAHLPAALASVKAWAEARL.

The Zn(2+) site is built by H563, H567, C664, and H668.

This sequence belongs to the class-II aminoacyl-tRNA synthetase family. It depends on Zn(2+) as a cofactor.

It is found in the cytoplasm. It carries out the reaction tRNA(Ala) + L-alanine + ATP = L-alanyl-tRNA(Ala) + AMP + diphosphate. Its function is as follows. Catalyzes the attachment of alanine to tRNA(Ala) in a two-step reaction: alanine is first activated by ATP to form Ala-AMP and then transferred to the acceptor end of tRNA(Ala). Also edits incorrectly charged Ser-tRNA(Ala) and Gly-tRNA(Ala) via its editing domain. In Aromatoleum aromaticum (strain DSM 19018 / LMG 30748 / EbN1) (Azoarcus sp. (strain EbN1)), this protein is Alanine--tRNA ligase.